A 506-amino-acid polypeptide reads, in one-letter code: Alpha-L-arabinofuranosidase B (506 aa).

A signal peptide spans methionine 1–alanine 26. Residues glycine 27–isoleucine 343 are catalytic. Intrachain disulfides connect cysteine 29/cysteine 39, cysteine 89/cysteine 94, and cysteine 184/cysteine 185. Residue asparagine 91 is glycosylated (N-linked (GlcNAc...) asparagine). Aspartate 227 provides a ligand contact to substrate. The Nucleophile role is filled by glutamate 229. Substrate-binding residues include asparagine 230 and glycine 304. The Proton donor role is filled by aspartate 305. The segment at alanine 344–alanine 506 is ABD. Cysteine 409 and cysteine 447 are joined by a disulfide. The substrate site is built by histidine 424, asparagine 426, phenylalanine 427, aspartate 443, histidine 471, glutamate 473, leucine 476, and aspartate 496.

Belongs to the glycosyl hydrolase 54 family.

Its subcellular location is the secreted. It catalyses the reaction Hydrolysis of terminal non-reducing alpha-L-arabinofuranoside residues in alpha-L-arabinosides.. It participates in glycan metabolism; L-arabinan degradation. Alpha-L-arabinofuranosidase involved in the degradation of arabinoxylan, a major component of plant hemicellulose. Able to hydrolyze 1,5-, 1,3- and 1,2-alpha-linkages not only in L-arabinofuranosyl oligosaccharides, but also in polysaccharides containing terminal non-reducing L-arabinofuranoses in side chains, like L-arabinan, arabinogalactan and arabinoxylan. The protein is Alpha-L-arabinofuranosidase B (abfB) of Aspergillus oryzae (strain ATCC 42149 / RIB 40) (Yellow koji mold).